A 79-amino-acid chain; its full sequence is Cyclin-dependent kinases regulatory subunit 2 (79 aa).

Lysine 4 is subject to N6-acetyllysine.

It belongs to the CKS family. In terms of assembly, forms a homohexamer that can probably bind six kinase subunits.

In terms of biological role, binds to the catalytic subunit of the cyclin dependent kinases and is essential for their biological function. This is Cyclin-dependent kinases regulatory subunit 2 (Cks2) from Mus musculus (Mouse).